The primary structure comprises 466 residues: Endoglucanase E-5 (466 aa).

The first 36 residues, 1–36, serve as a signal peptide directing secretion; sequence MAKSPAARKGXPPVAVAVTAALALLIALLSPGVAQA. One can recognise a CBM2 domain in the interval 37–139; sequence AGLTATVTKE…TINGAPCDEG (103 aa). The tract at residues 129-166 is disordered; the sequence is CTINGAPCDEGSEPGGPGGPGTPSPDPGTQPGTGTPVE. The Proton donor role is filled by Glu-299. Residue Glu-391 is the Nucleophile of the active site.

Belongs to the glycosyl hydrolase 5 (cellulase A) family.

It catalyses the reaction Endohydrolysis of (1-&gt;4)-beta-D-glucosidic linkages in cellulose, lichenin and cereal beta-D-glucans.. It functions in the pathway glycan metabolism; cellulose degradation. The protein is Endoglucanase E-5 (celE) of Thermobifida fusca (Thermomonospora fusca).